Reading from the N-terminus, the 99-residue chain is A-type ATP synthase subunit F (99 aa).

This sequence belongs to the V-ATPase F subunit family. As to quaternary structure, has multiple subunits with at least A(3), B(3), C, D, E, F, H, I and proteolipid K(x).

The protein localises to the cell membrane. Component of the A-type ATP synthase that produces ATP from ADP in the presence of a proton gradient across the membrane. This is A-type ATP synthase subunit F from Methanococcoides burtonii (strain DSM 6242 / NBRC 107633 / OCM 468 / ACE-M).